Reading from the N-terminus, the 233-residue chain is Putative quercetin 2,3-dioxygenase PM1685 (233 aa).

Residues histidine 59, histidine 61, histidine 103, and glutamate 105 each coordinate a divalent metal cation.

Belongs to the pirin family. The cofactor is a divalent metal cation.

It catalyses the reaction quercetin + O2 = 2-(3,4-dihydroxybenzoyloxy)-4,6-dihydroxybenzoate + CO. Its pathway is flavonoid metabolism; quercetin degradation. Functionally, putative quercetin 2,3-dioxygenase. The chain is Putative quercetin 2,3-dioxygenase PM1685 from Pasteurella multocida (strain Pm70).